The chain runs to 473 residues: Photosystem II CP43 reaction center protein (473 aa).

Positions 1 to 14 (MKILYSLRRFYHVE) are excised as a propeptide. T15 carries the post-translational modification N-acetylthreonine. T15 carries the phosphothreonine modification. A run of 5 helical transmembrane segments spans residues 69 to 93 (LFEVAHFVPEKPMYEQGLILLPHLA), 134 to 155 (LLGPETLEESFPFFGYVWKDRN), 178 to 200 (KALYFGGVYDTWAPGGGDVRKIT), 255 to 275 (KPFAWARRAFVWSGEAYLSYS), and 291 to 312 (WFNNTAYPSEFYGPTGPEASQA). E367 contacts [CaMn4O5] cluster. The chain crosses the membrane as a helical span at residues 447–471 (RARAAAAGFEKGIDRDLEPVLYMTP).

This sequence belongs to the PsbB/PsbC family. PsbC subfamily. In terms of assembly, PSII is composed of 1 copy each of membrane proteins PsbA, PsbB, PsbC, PsbD, PsbE, PsbF, PsbH, PsbI, PsbJ, PsbK, PsbL, PsbM, PsbT, PsbX, PsbY, PsbZ, Psb30/Ycf12, at least 3 peripheral proteins of the oxygen-evolving complex and a large number of cofactors. It forms dimeric complexes. Binds multiple chlorophylls and provides some of the ligands for the Ca-4Mn-5O cluster of the oxygen-evolving complex. It may also provide a ligand for a Cl- that is required for oxygen evolution. PSII binds additional chlorophylls, carotenoids and specific lipids. serves as cofactor.

It localises to the plastid. Its subcellular location is the chloroplast thylakoid membrane. Its function is as follows. One of the components of the core complex of photosystem II (PSII). It binds chlorophyll and helps catalyze the primary light-induced photochemical processes of PSII. PSII is a light-driven water:plastoquinone oxidoreductase, using light energy to abstract electrons from H(2)O, generating O(2) and a proton gradient subsequently used for ATP formation. This Saccharum hybrid (Sugarcane) protein is Photosystem II CP43 reaction center protein.